A 165-amino-acid chain; its full sequence is Glucosamine 6-phosphate N-acetyltransferase (165 aa).

Positions 22 to 165 (FKVRPLAKDD…DDCNFMTQRF (144 aa)) constitute an N-acetyltransferase domain. Substrate-binding positions include T44, 92–95 (KFIH), and 104–106 (EDV). 114–119 (RQKLGA) provides a ligand contact to acetyl-CoA. Substrate contacts are provided by residues 135–136 (YK) and R164.

Belongs to the acetyltransferase family. GNA1 subfamily.

The catalysed reaction is D-glucosamine 6-phosphate + acetyl-CoA = N-acetyl-D-glucosamine 6-phosphate + CoA + H(+). Its pathway is nucleotide-sugar biosynthesis; UDP-N-acetyl-alpha-D-glucosamine biosynthesis; N-acetyl-alpha-D-glucosamine 1-phosphate from alpha-D-glucosamine 6-phosphate (route I): step 1/2. In Caenorhabditis elegans, this protein is Glucosamine 6-phosphate N-acetyltransferase (gna-1).